A 294-amino-acid chain; its full sequence is 4-hydroxy-tetrahydrodipicolinate synthase (294 aa).

Residue T44 coordinates pyruvate. Y132 acts as the Proton donor/acceptor in catalysis. The active-site Schiff-base intermediate with substrate is the K160. V202 contributes to the pyruvate binding site.

The protein belongs to the DapA family. In terms of assembly, homotetramer; dimer of dimers.

It localises to the cytoplasm. It carries out the reaction L-aspartate 4-semialdehyde + pyruvate = (2S,4S)-4-hydroxy-2,3,4,5-tetrahydrodipicolinate + H2O + H(+). Its pathway is amino-acid biosynthesis; L-lysine biosynthesis via DAP pathway; (S)-tetrahydrodipicolinate from L-aspartate: step 3/4. In terms of biological role, catalyzes the condensation of (S)-aspartate-beta-semialdehyde [(S)-ASA] and pyruvate to 4-hydroxy-tetrahydrodipicolinate (HTPA). The polypeptide is 4-hydroxy-tetrahydrodipicolinate synthase (Leptospira borgpetersenii serovar Hardjo-bovis (strain JB197)).